We begin with the raw amino-acid sequence, 200 residues long: Guanylate kinase (200 aa).

One can recognise a Guanylate kinase-like domain in the interval 4–183 (GAVLIISGPS…AKEAMVAIAR (180 aa)). 11–18 (GPSGCGKS) contributes to the ATP binding site.

Belongs to the guanylate kinase family.

The protein resides in the cytoplasm. It catalyses the reaction GMP + ATP = GDP + ADP. Essential for recycling GMP and indirectly, cGMP. This Helicobacter hepaticus (strain ATCC 51449 / 3B1) protein is Guanylate kinase.